An 87-amino-acid polypeptide reads, in one-letter code: Translation initiation factor IF-1 2 (87 aa).

One can recognise an S1-like domain in the interval 1-72 (MAKEELLELD…TKGRINFRHK (72 aa)). The interval 68–87 (NFRHKDANSPRPPRSGQPRR) is disordered. A compositionally biased stretch (pro residues) spans 77 to 87 (PRPPRSGQPRR).

Belongs to the IF-1 family. As to quaternary structure, component of the 30S ribosomal translation pre-initiation complex which assembles on the 30S ribosome in the order IF-2 and IF-3, IF-1 and N-formylmethionyl-tRNA(fMet); mRNA recruitment can occur at any time during PIC assembly.

Its subcellular location is the cytoplasm. Its function is as follows. One of the essential components for the initiation of protein synthesis. Stabilizes the binding of IF-2 and IF-3 on the 30S subunit to which N-formylmethionyl-tRNA(fMet) subsequently binds. Helps modulate mRNA selection, yielding the 30S pre-initiation complex (PIC). Upon addition of the 50S ribosomal subunit IF-1, IF-2 and IF-3 are released leaving the mature 70S translation initiation complex. In Burkholderia cenocepacia (strain HI2424), this protein is Translation initiation factor IF-1 2.